Reading from the N-terminus, the 87-residue chain is Toxin Css39.8 (87 aa).

Residues 1-19 (MNSLLMITACFFLIGTVWA) form the signal peptide. Residues 20 to 85 (KEGYLVNKST…TYPLPNKSCS (66 aa)) form the LCN-type CS-alpha/beta domain. Intrachain disulfides connect C31–C84, C35–C60, C44–C65, and C48–C67.

The protein belongs to the long (4 C-C) scorpion toxin superfamily. Sodium channel inhibitor family. Beta subfamily. In terms of tissue distribution, expressed by the venom gland.

It is found in the secreted. In terms of biological role, beta toxins bind voltage-independently at site-4 of sodium channels (Nav) and shift the voltage of activation toward more negative potentials thereby affecting sodium channel activation and promoting spontaneous and repetitive firing. This toxin is lethal to crustaceans (freshwater crayfish (Cambarellus montezumae spp.)), it provokes a reversible paralysis to insects (crickets (Achaeta spp.)), but is not toxic to mice. At high concentrations, it does displace the (beta) mammal-specific toxin Cn2 from rat brain synaptosomes. This is Toxin Css39.8 from Centruroides suffusus (Durango bark scorpion).